We begin with the raw amino-acid sequence, 1145 residues long: Cation channel sperm-associated auxiliary subunit gamma 2 (1145 aa).

The N-terminal stretch at 1–38 (MVSRPAMSPVSPVWPRKPNLWAFWVLRLVLLLSLKSWA) is a signal peptide. The Extracellular portion of the chain corresponds to 39–1061 (EDALQHCTWL…IHGLPLSSKR (1023 aa)). Disulfide bonds link Cys-45/Cys-106 and Cys-160/Cys-166. Residue Asn-103 is glycosylated (N-linked (GlcNAc...) asparagine). The N-linked (GlcNAc...) asparagine glycan is linked to Asn-178. An intrachain disulfide couples Cys-289 to Cys-344. N-linked (GlcNAc...) asparagine glycans are attached at residues Asn-356, Asn-402, Asn-672, and Asn-743. Disulfide bonds link Cys-395–Cys-403, Cys-634–Cys-856, Cys-802–Cys-830, Cys-878–Cys-1042, Cys-905–Cys-914, and Cys-1006–Cys-1012. Asn-1038 carries N-linked (GlcNAc...) asparagine glycosylation. Residues 1062-1083 (TSFIVMVSTSFFIALVVFYILF) traverse the membrane as a helical segment. Residues 1084-1145 (CLVWPHIVKA…KEDNVQAKTA (62 aa)) lie on the Cytoplasmic side of the membrane.

This sequence belongs to the CATSPERG family. Component of the CatSper complex or CatSpermasome composed of the core pore-forming members CATSPER1, CATSPER2, CATSPER3 and CATSPER4 as well as auxiliary members CATSPERB, CATSPERG2, CATSPERD, CATSPERE, CATSPERZ, C2CD6/CATSPERT, SLCO6C1, TMEM249, TMEM262 and EFCAB9. HSPA1 may be an additional auxiliary complex member. The core complex members CATSPER1, CATSPER2, CATSPER3 and CATSPER4 form a heterotetrameric channel. The auxiliary CATSPERB, CATSPERG2, CATSPERD and CATSPERE subunits form a pavilion-like structure over the pore which stabilizes the complex through interactions with CATSPER4, CATSPER3, CATSPER1 and CATSPER2 respectively. SLCO6C1 interacts with CATSPERE and TMEM262/CATSPERH interacts with CATSPERB, further stabilizing the complex. C2CD6/CATSPERT interacts at least with CATSPERD and is required for targeting the CatSper complex in the flagellar membrane. In terms of tissue distribution, testis-specific. Specifically expressed in the principal piece of the sperm tail (at protein level). Expressed in spermatocytes and spermatids within the seminiferous tubule but not in interstitial cells.

It is found in the cell projection. The protein resides in the cilium. The protein localises to the flagellum membrane. Auxiliary component of the CatSper complex, a complex involved in sperm cell hyperactivation. Sperm cell hyperactivation is needed for sperm motility which is essential late in the preparation of sperm for fertilization. This is Cation channel sperm-associated auxiliary subunit gamma 2 from Mus musculus (Mouse).